A 558-amino-acid chain; its full sequence is Membrane protein insertase YidC (558 aa).

6 helical membrane passes run isoleucine 5 to phenylalanine 25, alanine 332 to phenylalanine 352, tyrosine 355 to phenylalanine 375, leucine 429 to isoleucine 449, leucine 474 to leucine 494, and phenylalanine 520 to tryptophan 540.

It belongs to the OXA1/ALB3/YidC family. Type 1 subfamily. As to quaternary structure, interacts with the Sec translocase complex via SecD. Specifically interacts with transmembrane segments of nascent integral membrane proteins during membrane integration.

The protein localises to the cell inner membrane. Its function is as follows. Required for the insertion and/or proper folding and/or complex formation of integral membrane proteins into the membrane. Involved in integration of membrane proteins that insert both dependently and independently of the Sec translocase complex, as well as at least some lipoproteins. Aids folding of multispanning membrane proteins. The chain is Membrane protein insertase YidC from Rickettsia typhi (strain ATCC VR-144 / Wilmington).